The sequence spans 93 residues: MKQWVLVKTFESLFAELTERAATRPEGSGTVAALDAGVHSQGKKILEEAGEVWIAAEHESDEALAEEISQLLYWTQVLMVGKGLKLEDVYRHL.

This sequence belongs to the PRA-PH family.

The protein resides in the cytoplasm. It catalyses the reaction 1-(5-phospho-beta-D-ribosyl)-ATP + H2O = 1-(5-phospho-beta-D-ribosyl)-5'-AMP + diphosphate + H(+). It functions in the pathway amino-acid biosynthesis; L-histidine biosynthesis; L-histidine from 5-phospho-alpha-D-ribose 1-diphosphate: step 2/9. The polypeptide is Phosphoribosyl-ATP pyrophosphatase (Rhodococcus jostii (strain RHA1)).